Here is a 319-residue protein sequence, read N- to C-terminus: Putative protein phosphatase 2C 23 (319 aa).

Positions 73 to 314 (AVRMESASCY…DDITVVVACI (242 aa)) constitute a PPM-type phosphatase domain. The Mn(2+) site is built by Gly-102, Asp-235, and Asp-305.

This sequence belongs to the PP2C family. Mg(2+) serves as cofactor.

The catalysed reaction is O-phospho-L-seryl-[protein] + H2O = L-seryl-[protein] + phosphate. The enzyme catalyses O-phospho-L-threonyl-[protein] + H2O = L-threonyl-[protein] + phosphate. This is Putative protein phosphatase 2C 23 from Oryza sativa subsp. japonica (Rice).